The following is a 334-amino-acid chain: Putative heat shock protein HSP 90-alpha A5 (334 aa).

A disordered region spans residues 55–107 (KRNKQVSDAEAEKKEDKRKKKKESNDKPEIEDVGSDEEEEKKDADKKKKKSKE). The segment covering 59–69 (QVSDAEAEKKE) has biased composition (basic and acidic residues). The segment covering 85–94 (EDVGSDEEEE) has biased composition (acidic residues). Serine 89 is modified (phosphoserine). Positions 234-267 (LELPEDEEEKKKQEEKKTKFENLCKIMKDMLEKK) form a coiled coil. The tract at residues 314 to 334 (EMPPLRGGDDTSRMEEVGGSG) is disordered. The span at 320–334 (GGDDTSRMEEVGGSG) shows a compositional bias: basic and acidic residues. The short motif at 327 to 331 (MEEVG) is the TPR repeat-binding element.

This sequence belongs to the heat shock protein 90 family. As to quaternary structure, homodimer.

The protein resides in the cytoplasm. Putative molecular chaperone that may promote the maturation, structural maintenance and proper regulation of specific target proteins. This Homo sapiens (Human) protein is Putative heat shock protein HSP 90-alpha A5 (HSP90AA5P).